Consider the following 262-residue polypeptide: Hydroxyethylthiazole kinase (262 aa).

Met50 provides a ligand contact to substrate. Arg125 and Thr171 together coordinate ATP. A substrate-binding site is contributed by Gly198.

It belongs to the Thz kinase family. It depends on Mg(2+) as a cofactor.

It carries out the reaction 5-(2-hydroxyethyl)-4-methylthiazole + ATP = 4-methyl-5-(2-phosphooxyethyl)-thiazole + ADP + H(+). It functions in the pathway cofactor biosynthesis; thiamine diphosphate biosynthesis; 4-methyl-5-(2-phosphoethyl)-thiazole from 5-(2-hydroxyethyl)-4-methylthiazole: step 1/1. In terms of biological role, catalyzes the phosphorylation of the hydroxyl group of 4-methyl-5-beta-hydroxyethylthiazole (THZ). The polypeptide is Hydroxyethylthiazole kinase (Shigella boydii serotype 18 (strain CDC 3083-94 / BS512)).